We begin with the raw amino-acid sequence, 206 residues long: CASP-like protein 4B2 (206 aa).

2 stretches are compositionally biased toward low complexity: residues 1 to 12 and 24 to 36; these read MAMVPADADAAA and SSQN…AAAA. A disordered region spans residues 1–42; that stretch reads MAMVPADADAAAKPPPDVEKPDYSSQNGAPNSAAAAAGGGGG. Topologically, residues 1 to 60 are cytoplasmic; sequence MAMVPADADAAAKPPPDVEKPDYSSQNGAPNSAAAAAGGGGGGVVDSVVARWRREDMLDK. A helical membrane pass occupies residues 61–81; the sequence is SPLALHAAAAAFAFVALVLVA. Over 82–99 the chain is Extracellular; sequence SNQHGDWMEFDRYQEYRY. Residues 100–120 form a helical membrane-spanning segment; sequence LLAIAALAFAYSLAQALRHAL. Over 121-138 the chain is Cytoplasmic; sequence RMRRGVDPVPTASGRLLD. A helical transmembrane segment spans residues 139–159; sequence FASDQVVAYLLMSALSAATPI. Topologically, residues 160–174 are extracellular; sequence TNRMRSAVINRFTDT. Residues 175 to 195 traverse the membrane as a helical segment; it reads TAAAISMAFLAFVSLALSAIV. At 196 to 206 the chain is on the cytoplasmic side; that stretch reads SGYKLSKQTYM.

Belongs to the Casparian strip membrane proteins (CASP) family. Homodimer and heterodimers.

It localises to the cell membrane. This Oryza sativa subsp. japonica (Rice) protein is CASP-like protein 4B2.